Reading from the N-terminus, the 398-residue chain is Phosphoglycerate kinase (398 aa).

Substrate-binding positions include 23–25 (DLN), arginine 38, 61–64 (HFGR), arginine 120, and arginine 153. Residues lysine 203, glutamate 325, and 355–358 (GGDT) each bind ATP.

The protein belongs to the phosphoglycerate kinase family. Monomer.

Its subcellular location is the cytoplasm. The enzyme catalyses (2R)-3-phosphoglycerate + ATP = (2R)-3-phospho-glyceroyl phosphate + ADP. It functions in the pathway carbohydrate degradation; glycolysis; pyruvate from D-glyceraldehyde 3-phosphate: step 2/5. In Mesorhizobium japonicum (strain LMG 29417 / CECT 9101 / MAFF 303099) (Mesorhizobium loti (strain MAFF 303099)), this protein is Phosphoglycerate kinase.